A 525-amino-acid chain; its full sequence is COP9 signalosome complex subunit 1b (525 aa).

Residues 298–460 (HFLNANFDHC…KILFAKEADQ (163 aa)) enclose the PCI domain.

Belongs to the CSN1 family. As to quaternary structure, component of the CSN complex, probably composed of CSN1b, alien/CSN2, CSN3, CSN4, CSN5, CSN6, CSN7 and CSN8.

It is found in the cytoplasm. The protein localises to the nucleus. Functionally, essential component of the COP9 signalosome complex (CSN), a complex involved in various cellular and developmental processes. The CSN complex is an essential regulator of the ubiquitin (Ubl) conjugation pathway by mediating the deneddylation of the cullin subunits of the SCF-type E3 ligase complexes, leading to decrease the Ubl ligase activity of SCF. The CSN complex plays an essential role in oogenesis and embryogenesis and is required for proper photoreceptor R cell differentiation and promote lamina glial cell migration or axon targeting. It also promotes Ubl-dependent degradation of cyclin E (CycE) during early oogenesis. The protein is COP9 signalosome complex subunit 1b (CSN1b) of Drosophila melanogaster (Fruit fly).